The sequence spans 339 residues: Very-long-chain 3-oxoacyl-CoA reductase (339 aa).

A helical membrane pass occupies residues 21–41 (WTTFLLALGSFNALRIIYQTL). NADP(+)-binding residues include Val-67, Asn-96, Asp-121, Asn-148, Tyr-215, Lys-219, Val-248, and Ser-250. Residue Tyr-215 is the Proton acceptor of the active site. Lys-219 acts as the Lowers pKa of active site Tyr in catalysis.

Belongs to the short-chain dehydrogenases/reductases (SDR) family.

It is found in the endoplasmic reticulum membrane. The enzyme catalyses a very-long-chain (3R)-3-hydroxyacyl-CoA + NADP(+) = a very-long-chain 3-oxoacyl-CoA + NADPH + H(+). It participates in lipid metabolism; fatty acid biosynthesis. In terms of biological role, component of the microsomal membrane bound fatty acid elongation system, which produces the 26-carbon very long-chain fatty acids (VLCFA) from palmitate. Catalyzes the reduction of the 3-ketoacyl-CoA intermediate that is formed in each cycle of fatty acid elongation. VLCFAs serve as precursors for ceramide and sphingolipids. The chain is Very-long-chain 3-oxoacyl-CoA reductase from Coprinopsis cinerea (strain Okayama-7 / 130 / ATCC MYA-4618 / FGSC 9003) (Inky cap fungus).